The sequence spans 75 residues: uncharacterized protein (75 aa).

4Fe-4S ferredoxin-type domains follow at residues 2–30 (SHTI…KGEG) and 37–68 (DWYW…KEEP). 2 residues coordinate [3Fe-4S] cluster: Cys-10 and Cys-16. The [4Fe-4S] cluster site is built by Cys-20, Cys-46, Cys-49, and Cys-52. Cys-56 lines the [3Fe-4S] cluster pocket.

Requires [4Fe-4S] cluster as cofactor. The cofactor is [3Fe-4S] cluster.

The protein resides in the plastid. It is found in the chloroplast. This is an uncharacterized protein from Porphyra purpurea (Red seaweed).